Here is a 193-residue protein sequence, read N- to C-terminus: Putative 3-methyladenine DNA glycosylase (193 aa).

The protein belongs to the DNA glycosylase MPG family.

In Francisella tularensis subsp. tularensis (strain FSC 198), this protein is Putative 3-methyladenine DNA glycosylase.